A 185-amino-acid chain; its full sequence is Ribose 1,5-bisphosphate phosphokinase PhnN (185 aa).

Residue 10-17 coordinates ATP; it reads GPSGSGKD.

The protein belongs to the ribose 1,5-bisphosphokinase family.

The catalysed reaction is alpha-D-ribose 1,5-bisphosphate + ATP = 5-phospho-alpha-D-ribose 1-diphosphate + ADP. It participates in metabolic intermediate biosynthesis; 5-phospho-alpha-D-ribose 1-diphosphate biosynthesis; 5-phospho-alpha-D-ribose 1-diphosphate from D-ribose 5-phosphate (route II): step 3/3. Functionally, catalyzes the phosphorylation of ribose 1,5-bisphosphate to 5-phospho-D-ribosyl alpha-1-diphosphate (PRPP). Accepts ATP but not GTP as a phosphoryl donor, and uses ribose 1,5-bisphosphate but not ribose, ribose 1-phosphate, or ribose 5-phosphate as a phosphoryl acceptor. This chain is Ribose 1,5-bisphosphate phosphokinase PhnN (phnN), found in Escherichia coli (strain K12).